Here is a 575-residue protein sequence, read N- to C-terminus: Sulfite reductase [NADPH] hemoprotein beta-component (575 aa).

[4Fe-4S] cluster contacts are provided by Cys-439, Cys-445, Cys-484, and Cys-488. Position 488 (Cys-488) interacts with siroheme.

It belongs to the nitrite and sulfite reductase 4Fe-4S domain family. As to quaternary structure, alpha(8)-beta(8). The alpha component is a flavoprotein, the beta component is a hemoprotein. Siroheme is required as a cofactor. Requires [4Fe-4S] cluster as cofactor.

The catalysed reaction is hydrogen sulfide + 3 NADP(+) + 3 H2O = sulfite + 3 NADPH + 4 H(+). It functions in the pathway sulfur metabolism; hydrogen sulfide biosynthesis; hydrogen sulfide from sulfite (NADPH route): step 1/1. Functionally, component of the sulfite reductase complex that catalyzes the 6-electron reduction of sulfite to sulfide. This is one of several activities required for the biosynthesis of L-cysteine from sulfate. The polypeptide is Sulfite reductase [NADPH] hemoprotein beta-component (Blochmanniella pennsylvanica (strain BPEN)).